The sequence spans 120 residues: Protein EPIDERMAL PATTERNING FACTOR 2 (120 aa).

A signal peptide spans methionine 1 to serine 25. Intrachain disulfides connect cysteine 76/cysteine 107, cysteine 80/cysteine 86, cysteine 83/cysteine 109, and cysteine 95/cysteine 101.

It belongs to the plant cysteine rich small secretory peptide family. Epidermal patterning factor subfamily. As to quaternary structure, interacts with ERECTA, ERL1 and TMM. Expressed in leaves, especially by the MMCs and their early descendants cells (stomatal lineage cells) including guard mother cells (GMCs).

Its subcellular location is the secreted. Functionally, controls stomatal patterning. Regulates the number of cells that enter, and remain in, the stomatal lineage by inhibiting protodermal cells from adopting the meristemoid mother cell (MMC) fate in a non-cell-autonomous manner. Mediates stomatal development inhibition. MEPF2: mobile signal controlling stomatal development in a non-cell-autonomous manner. Uses ERECTA as major receptor. Inactivated by cleavage by CRSP (AC Q9LNU1). May act by competing with somatogen (AC Q9SV72) for the same receptor, TMM (AC Q9SSD1). This is Protein EPIDERMAL PATTERNING FACTOR 2 from Arabidopsis thaliana (Mouse-ear cress).